The sequence spans 229 residues: Uracil-DNA glycosylase (229 aa).

D64 functions as the Proton acceptor in the catalytic mechanism.

This sequence belongs to the uracil-DNA glycosylase (UDG) superfamily. UNG family.

It localises to the cytoplasm. The enzyme catalyses Hydrolyzes single-stranded DNA or mismatched double-stranded DNA and polynucleotides, releasing free uracil.. Its function is as follows. Excises uracil residues from the DNA which can arise as a result of misincorporation of dUMP residues by DNA polymerase or due to deamination of cytosine. The chain is Uracil-DNA glycosylase from Geobacillus kaustophilus (strain HTA426).